The chain runs to 474 residues: Ribulose bisphosphate carboxylase large chain (474 aa).

Proline 2 carries the N-acetylproline modification. The residue at position 13 (lysine 13) is an N6,N6,N6-trimethyllysine. The substrate site is built by asparagine 122 and threonine 172. Lysine 174 (proton acceptor) is an active-site residue. Residue lysine 176 participates in substrate binding. Positions 200, 202, and 203 each coordinate Mg(2+). At lysine 200 the chain carries N6-carboxylysine. The Proton acceptor role is filled by histidine 293. Residues arginine 294, histidine 326, and serine 378 each coordinate substrate.

This sequence belongs to the RuBisCO large chain family. Type I subfamily. As to quaternary structure, heterohexadecamer of 8 large chains and 8 small chains; disulfide-linked. The disulfide link is formed within the large subunit homodimers. Mg(2+) serves as cofactor. In terms of processing, the disulfide bond which can form in the large chain dimeric partners within the hexadecamer appears to be associated with oxidative stress and protein turnover.

It localises to the plastid. Its subcellular location is the chloroplast. The enzyme catalyses 2 (2R)-3-phosphoglycerate + 2 H(+) = D-ribulose 1,5-bisphosphate + CO2 + H2O. The catalysed reaction is D-ribulose 1,5-bisphosphate + O2 = 2-phosphoglycolate + (2R)-3-phosphoglycerate + 2 H(+). In terms of biological role, ruBisCO catalyzes two reactions: the carboxylation of D-ribulose 1,5-bisphosphate, the primary event in carbon dioxide fixation, as well as the oxidative fragmentation of the pentose substrate in the photorespiration process. Both reactions occur simultaneously and in competition at the same active site. This chain is Ribulose bisphosphate carboxylase large chain, found in Oltmannsiellopsis viridis (Marine flagellate).